Here is a 31-residue protein sequence, read N- to C-terminus: Hemocyanin subunit 1 (31 aa).

Belongs to the tyrosinase family. Hemocyanin subfamily. As to expression, hemolymph.

The protein resides in the secreted. It localises to the extracellular space. In terms of biological role, hemocyanins are copper-containing oxygen carriers occurring freely dissolved in the hemolymph of many mollusks and arthropods. This Homarus americanus (American lobster) protein is Hemocyanin subunit 1.